Reading from the N-terminus, the 669-residue chain is UvrABC system protein B (669 aa).

A Helicase ATP-binding domain is found at 26–183 (TNFHAGIAKQ…RHLTELQYTR (158 aa)). 39–46 (GVTGSGKT) serves as a coordination point for ATP. Residues 92–115 (YYDYYQPEAYVPASDTFIEKDSSI) carry the Beta-hairpin motif. The 167-residue stretch at 431 to 597 (QVDDLISQIN…SVVRPISDIL (167 aa)) folds into the Helicase C-terminal domain. In terms of domain architecture, UVR spans 631–666 (AAQMKVLEQKMYQHARDLEFEDAARIRDQIQRLREA).

This sequence belongs to the UvrB family. In terms of assembly, forms a heterotetramer with UvrA during the search for lesions. Interacts with UvrC in an incision complex.

It is found in the cytoplasm. Functionally, the UvrABC repair system catalyzes the recognition and processing of DNA lesions. A damage recognition complex composed of 2 UvrA and 2 UvrB subunits scans DNA for abnormalities. Upon binding of the UvrA(2)B(2) complex to a putative damaged site, the DNA wraps around one UvrB monomer. DNA wrap is dependent on ATP binding by UvrB and probably causes local melting of the DNA helix, facilitating insertion of UvrB beta-hairpin between the DNA strands. Then UvrB probes one DNA strand for the presence of a lesion. If a lesion is found the UvrA subunits dissociate and the UvrB-DNA preincision complex is formed. This complex is subsequently bound by UvrC and the second UvrB is released. If no lesion is found, the DNA wraps around the other UvrB subunit that will check the other stand for damage. This Xylella fastidiosa (strain M23) protein is UvrABC system protein B.